The chain runs to 237 residues: Chalcone--flavanone isomerase 1 (237 aa).

Substrate is bound by residues threonine 48, asparagine 113, and serine 190.

It belongs to the chalcone isomerase family.

The catalysed reaction is a chalcone = a flavanone.. The protein operates within secondary metabolite biosynthesis; flavonoid biosynthesis. Functionally, catalyzes the intramolecular cyclization of bicyclic chalcones into tricyclic (S)-flavanones. Responsible for the isomerization of 4,2',4',6'-tetrahydroxychalcone (also termed chalcone) into naringenin. The chain is Chalcone--flavanone isomerase 1 (CHI1) from Fragaria ananassa (Strawberry).